The primary structure comprises 650 residues: Acetyl-coenzyme A synthetase (650 aa).

CoA contacts are provided by residues 191–194 (RGGR), T311, and N335. Residues 387-389 (GEP), 411-416 (DTWWQT), D501, and R516 contribute to the ATP site. S524 is a binding site for CoA. R527 is an ATP binding site. V538, H540, and I543 together coordinate Mg(2+). Residue R585 participates in CoA binding. K610 is modified (N6-acetyllysine).

Belongs to the ATP-dependent AMP-binding enzyme family. Mg(2+) serves as cofactor. Post-translationally, acetylated. Deacetylation by the SIR2-homolog deacetylase activates the enzyme.

It catalyses the reaction acetate + ATP + CoA = acetyl-CoA + AMP + diphosphate. Its function is as follows. Catalyzes the conversion of acetate into acetyl-CoA (AcCoA), an essential intermediate at the junction of anabolic and catabolic pathways. AcsA undergoes a two-step reaction. In the first half reaction, AcsA combines acetate with ATP to form acetyl-adenylate (AcAMP) intermediate. In the second half reaction, it can then transfer the acetyl group from AcAMP to the sulfhydryl group of CoA, forming the product AcCoA. This Vibrio parahaemolyticus serotype O3:K6 (strain RIMD 2210633) protein is Acetyl-coenzyme A synthetase.